The primary structure comprises 415 residues: Dihydroorotase (415 aa).

Zn(2+) contacts are provided by His-54 and His-56. Substrate contacts are provided by residues 56 to 58 and Asn-88; that span reads HFR. The Zn(2+) site is built by Lys-136, His-169, His-217, and Asp-278. Position 136 is an N6-carboxylysine (Lys-136). The active site involves Asp-278. A substrate-binding site is contributed by His-282.

The protein belongs to the metallo-dependent hydrolases superfamily. DHOase family. Class I DHOase subfamily. It depends on Zn(2+) as a cofactor.

The catalysed reaction is (S)-dihydroorotate + H2O = N-carbamoyl-L-aspartate + H(+). It functions in the pathway pyrimidine metabolism; UMP biosynthesis via de novo pathway; (S)-dihydroorotate from bicarbonate: step 3/3. Its function is as follows. Catalyzes the reversible cyclization of carbamoyl aspartate to dihydroorotate. The chain is Dihydroorotase from Thermoplasma volcanium (strain ATCC 51530 / DSM 4299 / JCM 9571 / NBRC 15438 / GSS1).